Consider the following 88-residue polypeptide: Apolipoprotein C-I (88 aa).

A signal peptide spans 1-26; that stretch reads MRLFIALPVLIVVVAMALEGPAPAQA.

Belongs to the apolipoprotein C1 family.

The protein resides in the secreted. Functionally, inhibitor of lipoprotein binding to the low density lipoprotein (LDL) receptor, LDL receptor-related protein, and very low density lipoprotein (VLDL) receptor. Associates with high density lipoproteins (HDL) and the triacylglycerol-rich lipoproteins in the plasma and makes up about 10% of the protein of the VLDL and 2% of that of HDL. Appears to interfere directly with fatty acid uptake and is also the major plasma inhibitor of cholesteryl ester transfer protein (CETP). Binds free fatty acids and reduces their intracellular esterification. Modulates the interaction of APOE with beta-migrating VLDL and inhibits binding of beta-VLDL to the LDL receptor-related protein. This Rattus norvegicus (Rat) protein is Apolipoprotein C-I (Apoc1).